The following is a 135-amino-acid chain: Small ribosomal subunit protein uS11 (135 aa).

Belongs to the universal ribosomal protein uS11 family. Part of the 30S ribosomal subunit. Interacts with proteins S7 and S18. Binds to IF-3.

In terms of biological role, located on the platform of the 30S subunit, it bridges several disparate RNA helices of the 16S rRNA. Forms part of the Shine-Dalgarno cleft in the 70S ribosome. The polypeptide is Small ribosomal subunit protein uS11 (Corynebacterium urealyticum (strain ATCC 43042 / DSM 7109)).